Consider the following 73-residue polypeptide: Large ribosomal subunit protein bL31 (73 aa).

Residues Cys-16, Cys-18, Cys-38, and Cys-41 each coordinate Zn(2+).

Belongs to the bacterial ribosomal protein bL31 family. Type A subfamily. As to quaternary structure, part of the 50S ribosomal subunit. Zn(2+) is required as a cofactor.

Binds the 23S rRNA. In Streptomyces avermitilis (strain ATCC 31267 / DSM 46492 / JCM 5070 / NBRC 14893 / NCIMB 12804 / NRRL 8165 / MA-4680), this protein is Large ribosomal subunit protein bL31.